The chain runs to 837 residues: A disintegrin and metalloproteinase with thrombospondin motifs 4 (837 aa).

A signal peptide spans 1-51 (MSQTGSHPGRGLAGRWLWGAQPCLLLPIVPLSWLVWLLLLLLASLLPSARL). Positions 52–212 (ASPLPREEEI…PSPRPRRAKR (161 aa)) are excised as a propeptide. N-linked (GlcNAc...) asparagine glycosylation is present at asparagine 68. Positions 192–199 (PMCNVKAP) match the Cysteine switch motif. Cysteine 194 provides a ligand contact to Zn(2+). A Peptidase M12B domain is found at 218 to 428 (RFVETLVVAD…GYGHCLLDKP (211 aa)). 11 disulfides stabilise this stretch: cysteine 293–cysteine 345, cysteine 322–cysteine 327, cysteine 339–cysteine 423, cysteine 377–cysteine 407, cysteine 449–cysteine 472, cysteine 460–cysteine 482, cysteine 467–cysteine 501, cysteine 495–cysteine 506, cysteine 532–cysteine 569, cysteine 536–cysteine 574, and cysteine 547–cysteine 559. Histidine 361 is a binding site for Zn(2+). The active site involves glutamate 362. Zn(2+)-binding residues include histidine 365 and histidine 371. The region spanning 437–519 (TFPGKDYDAD…DQLQDFNIPQ (83 aa)) is the Disintegrin domain. Residues 520-575 (AGGWGPWGPWGDCSRTCGGGVQFSSRDCTRPVPRNGGKYCEGRRTRFRSCNTEDCP) form the TSP type-1 domain. The interval 686–837 (SKQSGSFRKF…LRRRPWAGRK (152 aa)) is spacer.

As to quaternary structure, interacts with SRPX2. It depends on Zn(2+) as a cofactor. Post-translationally, the precursor is cleaved by a furin endopeptidase. Glycosylated. Can be O-fucosylated by POFUT2 on a serine or a threonine residue found within the consensus sequence C1-X(2)-(S/T)-C2-G of the TSP type-1 repeat domains where C1 and C2 are the first and second cysteine residue of the repeat, respectively. Fucosylated repeats can then be further glycosylated by the addition of a beta-1,3-glucose residue by the glucosyltransferase, B3GALTL. Fucosylation mediates the efficient secretion of ADAMTS family members. Can also be C-glycosylated with one or two mannose molecules on tryptophan residues within the consensus sequence W-X-X-W of the TPRs, and N-glycosylated. These other glycosylations can also facilitate secretion. In terms of tissue distribution, expressed in brain, lung and heart. Expressed at very low level in placenta and skeletal muscles. Isoform 2: Detected in osteoarthritic synovium.

The protein resides in the secreted. It localises to the extracellular space. The protein localises to the extracellular matrix. The catalysed reaction is Glutamyl endopeptidase. Bonds cleaved include 370-Thr-Glu-Gly-Glu-|-Ala-Arg-Gly-Ser-377 in the interglobular domain of mammalian aggrecan.. In terms of biological role, cleaves aggrecan, a cartilage proteoglycan, at the '392-Glu-|-Ala-393' site and may be involved in its turnover. Also cleaves COMP. May play an important role in the destruction of aggrecan in arthritic diseases. Could be a critical factor in the exacerbation of neurodegeneration in Alzheimer disease. The chain is A disintegrin and metalloproteinase with thrombospondin motifs 4 (ADAMTS4) from Homo sapiens (Human).